A 229-amino-acid chain; its full sequence is tRNA pseudouridine synthase B (229 aa).

The Nucleophile role is filled by Asp-42.

The protein belongs to the pseudouridine synthase TruB family. Type 1 subfamily.

It carries out the reaction uridine(55) in tRNA = pseudouridine(55) in tRNA. Responsible for synthesis of pseudouridine from uracil-55 in the psi GC loop of transfer RNAs. The protein is tRNA pseudouridine synthase B of Ureaplasma urealyticum serovar 10 (strain ATCC 33699 / Western).